Here is a 503-residue protein sequence, read N- to C-terminus: Protein phosphatase eya-1 (503 aa).

Asp-237 (nucleophile) is an active-site residue. Asp-237 and Asp-239 together coordinate Mg(2+). Asp-239 serves as the catalytic Proton donor.

The protein belongs to the HAD-like hydrolase superfamily. EYA family. As to quaternary structure, interacts (via C-terminus) with ceh-34 (via N-terminus). Requires Mg(2+) as cofactor. Expressed in body wall muscles. Expressed in BAG sensory neurons and in other head neurons.

The protein resides in the nucleus. The enzyme catalyses O-phospho-L-tyrosyl-[protein] + H2O = L-tyrosyl-[protein] + phosphate. Its function is as follows. Tyrosine protein phosphatase. Acts probably as a transcription regulator in the embryonic and postembryonic development of several tissues including pharynx, vulva and gonads. Required for the development of anterior tissues during late embryogenesis. Together with ceh-34, required to specify the coelomocyte fate in embryonic and postembryonic precursors. In the anterior part of the embryo, prevents apoptosis in cells that are not fated to die. Together with ceh-34 activates proapoptotic factor egl-1 expression to promote motor neuron M4 sister cell apoptosis. Also promotes apoptosis of I1 pharyngeal neuron sister cell. Plays a role in locomotion and fertility. May play a role in resistance to heat and oxidative stresses. May cooperate with the transcription factors vab-3 and ceh-32 to repress transcription factor ets-5 expression in non BAG neuronal cells. This chain is Protein phosphatase eya-1, found in Caenorhabditis elegans.